The following is a 367-amino-acid chain: F-box protein At3g56470 (367 aa).

Residues 1 to 18 are compositionally biased toward basic residues; the sequence is MVTRRRSKKKKKTKRKKQ. The tract at residues 1-24 is disordered; it reads MVTRRRSKKKKKTKRKKQSSKEKE. Positions 26-81 constitute an F-box domain; it reads YQTFINLPCDLLQLVISRLPLKDNIRASAVCKTWHEACVSLRVIHTSPWLIYFSKT.

This chain is F-box protein At3g56470, found in Arabidopsis thaliana (Mouse-ear cress).